Here is a 157-residue protein sequence, read N- to C-terminus: Frd operon probable iron-sulfur subunit A (157 aa).

3 4Fe-4S ferredoxin-type domains span residues 24–55, 56–85, and 100–133; these read KGFSISTAVVCHQCEDAPCANVCPNGAIIHNK, DYYYVDQDKCIGCKTCVLACPYGTMEVVSR, and FKAEANKCDLCHHRAEGPACVEVCPTQALVCIDR. [4Fe-4S] cluster is bound by residues cysteine 34, cysteine 37, cysteine 42, cysteine 46, cysteine 65, cysteine 68, cysteine 71, cysteine 75, cysteine 107, cysteine 110, cysteine 119, and cysteine 123.

The polypeptide is Frd operon probable iron-sulfur subunit A (Proteus vulgaris).